We begin with the raw amino-acid sequence, 814 residues long: Testis-specific zinc finger protein topi (814 aa).

C2H2-type zinc fingers lie at residues 228–250 (NECTMCDRKFVHASGLVRHMEKH), 275–297 (VKCNSCGRIFYDPQVAFRHGLIH), 360–382 (LQCEFCEYIFADIAELLVHSASH), 429–453 (FVCNVCELKFANTDLLQEHRCTSFH), 467–490 (LPCDFCDVNFEFAHDFLAHSEEKH), 511–533 (YLCDICGKSYTQSSHLWQHLRFH), 539–564 (FVCQEENCDRKFTIRPDLNDHIRKCH), 570–592 (YLCLVCGKRFLTGSVFYQHRLIH), 598–620 (YECEECGKRFYRADALKNHQRIH), and 626–649 (YSCLFCTKTFRQRGDRDKHIRARH). The tract at residues 669-705 (TAAAQKAQSHNPEQQDNDVAGGASTSDVPSGSGFMST) is disordered. The segment covering 691–705 (ASTSDVPSGSGFMST) has biased composition (polar residues).

In terms of assembly, interacts with comr. In terms of tissue distribution, expressed in testis; primary spermatocytes.

The protein localises to the nucleus. Its function is as follows. Required for male meiotic division and spermatid differentiation. Required for accumulation of aly and comr on chromatin. May function as a transcription factor. This Drosophila melanogaster (Fruit fly) protein is Testis-specific zinc finger protein topi (topi).